Reading from the N-terminus, the 102-residue chain is Small ribosomal subunit protein uS10 (102 aa).

Belongs to the universal ribosomal protein uS10 family. In terms of assembly, part of the 30S ribosomal subunit.

Its function is as follows. Involved in the binding of tRNA to the ribosomes. The protein is Small ribosomal subunit protein uS10 of Desulforamulus reducens (strain ATCC BAA-1160 / DSM 100696 / MI-1) (Desulfotomaculum reducens).